The chain runs to 809 residues: Chorion peroxidase (809 aa).

The first 21 residues, 1 to 21 (MSRILFILLLLIVTQLSELQA), serve as a signal peptide directing secretion. Residues 22–223 (AAFSVRQNRF…KFTETPLAHH (202 aa)) constitute a propeptide that is removed on maturation. The disordered stretch occupies residues 36–55 (DLQTPAPLATSTESSKKPEK). Asn-110 carries N-linked (GlcNAc...) asparagine glycosylation. Cys-224 is subject to N-acetylcysteine; in Chorion peroxidase light chain. An intrachain disulfide couples Cys-230 to Cys-244. The Proton acceptor role is filled by His-320. A disulfide bond links Cys-448 and Cys-457. His-568 lines the heme b pocket. Cys-765 and Cys-794 are joined by a disulfide.

The protein belongs to the peroxidase family. XPO subfamily. As to quaternary structure, heterodimer. The cofactor is heme b. Expressed at low levels in the germarium and early follicles. Expression becomes progressively stronger during vitellogenesis, and is highly expressed in germ cells and somatic cells. A subset of follicle cells, termed border cells (BC), exhibit a high level of expression.

It localises to the secreted. The catalysed reaction is 2 a phenolic donor + H2O2 = 2 a phenolic radical donor + 2 H2O. Functionally, required for ovarian follicle maturation. Involved in the formation of a rigid and insoluble egg chorion by catalyzing chorion protein cross-linking through dityrosine formation and phenol oxidase-catalyzed chorion melanization. The polypeptide is Chorion peroxidase (Pxt) (Drosophila melanogaster (Fruit fly)).